Consider the following 278-residue polypeptide: Phosphatidylglycerol--prolipoprotein diacylglyceryl transferase (278 aa).

A run of 3 helical transmembrane segments spans residues 21–41 (WYGI…QASV), 54–74 (IIFW…VIFQ), and 88–108 (IWHG…TGII). Arg136 is a binding site for a 1,2-diacyl-sn-glycero-3-phospho-(1'-sn-glycerol). A run of 2 helical transmembrane segments spans residues 176–196 (QPTF…LILL) and 234–254 (IRVA…IMII).

It belongs to the Lgt family.

Its subcellular location is the cell membrane. The enzyme catalyses L-cysteinyl-[prolipoprotein] + a 1,2-diacyl-sn-glycero-3-phospho-(1'-sn-glycerol) = an S-1,2-diacyl-sn-glyceryl-L-cysteinyl-[prolipoprotein] + sn-glycerol 1-phosphate + H(+). Its pathway is protein modification; lipoprotein biosynthesis (diacylglyceryl transfer). In terms of biological role, catalyzes the transfer of the diacylglyceryl group from phosphatidylglycerol to the sulfhydryl group of the N-terminal cysteine of a prolipoprotein, the first step in the formation of mature lipoproteins. The polypeptide is Phosphatidylglycerol--prolipoprotein diacylglyceryl transferase (Staphylococcus xylosus).